The chain runs to 689 residues: Glycine--tRNA ligase beta subunit (689 aa).

The protein belongs to the class-II aminoacyl-tRNA synthetase family. Tetramer of two alpha and two beta subunits.

It is found in the cytoplasm. It carries out the reaction tRNA(Gly) + glycine + ATP = glycyl-tRNA(Gly) + AMP + diphosphate. The protein is Glycine--tRNA ligase beta subunit of Shigella boydii serotype 18 (strain CDC 3083-94 / BS512).